The sequence spans 92 residues: Small ribosomal subunit protein uS19 (92 aa).

Belongs to the universal ribosomal protein uS19 family.

In terms of biological role, protein S19 forms a complex with S13 that binds strongly to the 16S ribosomal RNA. The protein is Small ribosomal subunit protein uS19 of Tolumonas auensis (strain DSM 9187 / NBRC 110442 / TA 4).